The following is a 182-amino-acid chain: Flavin prenyltransferase UbiX (182 aa).

Residues 9–11 (GAS), Ser-35, 86–89 (SIKT), and Arg-121 contribute to the FMN site. Dimethylallyl phosphate is bound by residues Tyr-151 and Arg-167.

Belongs to the UbiX/PAD1 family.

It carries out the reaction dimethylallyl phosphate + FMNH2 = prenylated FMNH2 + phosphate. Flavin prenyltransferase that catalyzes the synthesis of the prenylated FMN cofactor (prenyl-FMN) for 4-hydroxy-3-polyprenylbenzoic acid decarboxylase UbiD. The prenyltransferase is metal-independent and links a dimethylallyl moiety from dimethylallyl monophosphate (DMAP) to the flavin N5 and C6 atoms of FMN. This Archaeoglobus fulgidus (strain ATCC 49558 / DSM 4304 / JCM 9628 / NBRC 100126 / VC-16) protein is Flavin prenyltransferase UbiX.